Consider the following 397-residue polypeptide: 1-deoxy-D-xylulose 5-phosphate reductoisomerase (397 aa).

8 residues coordinate NADPH: T12, G13, S14, I15, G38, K39, N40, and N126. Position 127 (K127) interacts with 1-deoxy-D-xylulose 5-phosphate. E128 contacts NADPH. Residue D152 participates in Mn(2+) binding. 1-deoxy-D-xylulose 5-phosphate is bound by residues S153, E154, S188, and H211. E154 is a binding site for Mn(2+). G217 is a binding site for NADPH. 1-deoxy-D-xylulose 5-phosphate contacts are provided by S224, N229, K230, and E233. E233 provides a ligand contact to Mn(2+).

It belongs to the DXR family. Mg(2+) is required as a cofactor. It depends on Mn(2+) as a cofactor.

It carries out the reaction 2-C-methyl-D-erythritol 4-phosphate + NADP(+) = 1-deoxy-D-xylulose 5-phosphate + NADPH + H(+). It participates in isoprenoid biosynthesis; isopentenyl diphosphate biosynthesis via DXP pathway; isopentenyl diphosphate from 1-deoxy-D-xylulose 5-phosphate: step 1/6. Functionally, catalyzes the NADPH-dependent rearrangement and reduction of 1-deoxy-D-xylulose-5-phosphate (DXP) to 2-C-methyl-D-erythritol 4-phosphate (MEP). This is 1-deoxy-D-xylulose 5-phosphate reductoisomerase from Haemophilus influenzae (strain PittGG).